A 468-amino-acid polypeptide reads, in one-letter code: Siroheme synthase (468 aa).

Residues 1–203 form a precorrin-2 dehydrogenase /sirohydrochlorin ferrochelatase region; that stretch reads MQYLPIFLNI…GQEEEAEGAL (203 aa). NAD(+)-binding positions include 22–23 and 43–44; these read TV and PK. A Phosphoserine modification is found at S128. A uroporphyrinogen-III C-methyltransferase region spans residues 216 to 468; sequence GEVYLVGAGP…VPDREPLDAR (253 aa). P225 is a binding site for S-adenosyl-L-methionine. D248 acts as the Proton acceptor in catalysis. K270 acts as the Proton donor in catalysis. S-adenosyl-L-methionine contacts are provided by residues 301–303, I306, 331–332, M383, and G412; these read GGD and TA.

This sequence in the N-terminal section; belongs to the precorrin-2 dehydrogenase / sirohydrochlorin ferrochelatase family. The protein in the C-terminal section; belongs to the precorrin methyltransferase family.

The enzyme catalyses uroporphyrinogen III + 2 S-adenosyl-L-methionine = precorrin-2 + 2 S-adenosyl-L-homocysteine + H(+). It carries out the reaction precorrin-2 + NAD(+) = sirohydrochlorin + NADH + 2 H(+). It catalyses the reaction siroheme + 2 H(+) = sirohydrochlorin + Fe(2+). It participates in cofactor biosynthesis; adenosylcobalamin biosynthesis; precorrin-2 from uroporphyrinogen III: step 1/1. The protein operates within cofactor biosynthesis; adenosylcobalamin biosynthesis; sirohydrochlorin from precorrin-2: step 1/1. Its pathway is porphyrin-containing compound metabolism; siroheme biosynthesis; precorrin-2 from uroporphyrinogen III: step 1/1. It functions in the pathway porphyrin-containing compound metabolism; siroheme biosynthesis; siroheme from sirohydrochlorin: step 1/1. It participates in porphyrin-containing compound metabolism; siroheme biosynthesis; sirohydrochlorin from precorrin-2: step 1/1. Functionally, multifunctional enzyme that catalyzes the SAM-dependent methylations of uroporphyrinogen III at position C-2 and C-7 to form precorrin-2 via precorrin-1. Then it catalyzes the NAD-dependent ring dehydrogenation of precorrin-2 to yield sirohydrochlorin. Finally, it catalyzes the ferrochelation of sirohydrochlorin to yield siroheme. The chain is Siroheme synthase from Nitrosococcus oceani (strain ATCC 19707 / BCRC 17464 / JCM 30415 / NCIMB 11848 / C-107).